Reading from the N-terminus, the 561-residue chain is AT-rich interactive domain-containing protein 3B (561 aa).

An N-acetylmethionine modification is found at methionine 1. Residues 1 to 17 (MEPLQQQQQQQQQQQKQ) are compositionally biased toward low complexity. Disordered stretches follow at residues 1 to 36 (MEPL…QQMR), 53 to 122 (LSAT…SKYF), and 136 to 179 (PMSN…WNLD). Phosphoserine is present on serine 89. Residues 90-109 (EPEEEDGGLEDEDGDDEVAE) are compositionally biased toward acidic residues. A compositionally biased stretch (basic and acidic residues) spans 152 to 162 (QAKEDHTKDAS). Polar residues predominate over residues 164–178 (ASPSVSTAGQPNWNL). Position 165 is a phosphoserine (serine 165). The interaction with RB1 stretch occupies residues 203–365 (SRDFAKLYEL…SPPKIRFPIL (163 aa)). In terms of domain architecture, ARID spans 215–307 (DPERKEFLDD…YLYAYECEKK (93 aa)). Position 311 is a phosphoserine (serine 311). Arginine 361 carries the asymmetric dimethylarginine modification. The interval 370 to 397 (SSGTNTSSPRISPATTLRKGDGAPVTTV) is disordered. In terms of domain architecture, REKLES spans 419–517 (AALEQLRERL…GVLFAQKPVV (99 aa)). The tract at residues 490–513 (SSIGSINMSVDIDGTTYAGVLFAQ) is interaction with ARID3A. Residues 523 to 552 (SAPQSLGSSASSSSSSHCSPSPTSSRGTPS) are compositionally biased toward low complexity. Residues 523–561 (SAPQSLGSSASSSSSSHCSPSPTSSRGTPSAEPSTSWSL) form a disordered region.

In terms of assembly, heterodimer with ARID3A. Interacts with unphosphorylated RB1. In terms of tissue distribution, expressed in placenta, testis and leukocytes. Expressed in neuroblastoma. Present in K-562 erythrocytic leukemia cell line (at protein level).

It localises to the nucleus. In terms of biological role, transcription factor which may be involved in neuroblastoma growth and malignant transformation. Favors nuclear targeting of ARID3A. This chain is AT-rich interactive domain-containing protein 3B (ARID3B), found in Homo sapiens (Human).